Reading from the N-terminus, the 43-residue chain is Holotricin-1 (43 aa).

3 disulfides stabilise this stretch: Cys-3/Cys-34, Cys-20/Cys-39, and Cys-24/Cys-41.

This sequence belongs to the invertebrate defensin family. Type 1 subfamily. Hemolymph.

Its subcellular location is the secreted. In terms of biological role, shows potent antibacterial activity against Gram-positive bacteria. The protein is Holotricin-1 of Holotrichia diomphalia (Korean black chafer).